A 355-amino-acid polypeptide reads, in one-letter code: Probable cinnamyl alcohol dehydrogenase (355 aa).

Residue C47 participates in Zn(2+) binding. S49 lines the NADP(+) pocket. 7 residues coordinate Zn(2+): H69, E70, C100, C103, C106, C114, and C162. NADP(+)-binding positions include T166, 187 to 192 (GLGGVG), 210 to 215 (SSSDKK), T250, G274, and 297 to 299 (SFI).

Belongs to the zinc-containing alcohol dehydrogenase family. As to quaternary structure, homodimer. Zn(2+) is required as a cofactor.

The catalysed reaction is (E)-cinnamyl alcohol + NADP(+) = (E)-cinnamaldehyde + NADPH + H(+). It carries out the reaction (E)-coniferol + NADP(+) = (E)-coniferaldehyde + NADPH + H(+). The enzyme catalyses (E)-sinapyl alcohol + NADP(+) = (E)-sinapaldehyde + NADPH + H(+). It catalyses the reaction (E)-4-coumaroyl alcohol + NADP(+) = (E)-4-coumaraldehyde + NADPH + H(+). The catalysed reaction is (E)-caffeyl alcohol + NADP(+) = (E)-caffeyl aldehyde + NADPH + H(+). The protein operates within aromatic compound metabolism; phenylpropanoid biosynthesis. Functionally, involved in lignin biosynthesis. Catalyzes the final step specific for the production of lignin monomers. Catalyzes the NADPH-dependent reduction of coniferaldehyde, 5-hydroxyconiferaldehyde, sinapaldehyde, 4-coumaraldehyde and caffeyl aldehyde to their respective alcohols. The polypeptide is Probable cinnamyl alcohol dehydrogenase (CAD1) (Eucalyptus botryoides (Southern mahogany)).